Here is a 72-residue protein sequence, read N- to C-terminus: uncharacterized protein (72 aa).

A compositionally biased stretch (low complexity) spans 1 to 38 (MSIFSSLSSLSTGSLKSSVSSIENGSSSGSFGSNETSG). Positions 1 to 42 (MSIFSSLSSLSTGSLKSSVSSIENGSSSGSFGSNETSGWGQH) are disordered.

This is an uncharacterized protein from Dictyostelium discoideum (Social amoeba).